We begin with the raw amino-acid sequence, 687 residues long: Glycine--tRNA ligase beta subunit (687 aa).

This sequence belongs to the class-II aminoacyl-tRNA synthetase family. Tetramer of two alpha and two beta subunits.

It is found in the cytoplasm. It catalyses the reaction tRNA(Gly) + glycine + ATP = glycyl-tRNA(Gly) + AMP + diphosphate. The polypeptide is Glycine--tRNA ligase beta subunit (Citrifermentans bemidjiense (strain ATCC BAA-1014 / DSM 16622 / JCM 12645 / Bem) (Geobacter bemidjiensis)).